The chain runs to 353 residues: Photosystem II D2 protein (353 aa).

N-acetylthreonine is present on T2. Position 2 is a phosphothreonine (T2). A helical membrane pass occupies residues 41–61; sequence CAYFALGGWFTGTTFVTSWYT. Position 118 (H118) interacts with chlorophyll a. Residues 125–141 form a helical membrane-spanning segment; that stretch reads GFMLRQFELARSVQLRP. Positions 130 and 143 each coordinate pheophytin a. A helical membrane pass occupies residues 153–166; that stretch reads VFVSVFLIYPLGQS. Residue H198 coordinates chlorophyll a. A helical transmembrane segment spans residues 208–228; sequence AALLCAIHGATVENTLFEDGD. Positions 215 and 262 each coordinate a plastoquinone. H215 contacts Fe cation. Fe cation is bound at residue H269. A helical transmembrane segment spans residues 279–295; it reads GLWMSAIGVVGLALNLR.

This sequence belongs to the reaction center PufL/M/PsbA/D family. PSII is composed of 1 copy each of membrane proteins PsbA, PsbB, PsbC, PsbD, PsbE, PsbF, PsbH, PsbI, PsbJ, PsbK, PsbL, PsbM, PsbT, PsbX, PsbY, PsbZ, Psb30/Ycf12, at least 3 peripheral proteins of the oxygen-evolving complex and a large number of cofactors. It forms dimeric complexes. The D1/D2 heterodimer binds P680, chlorophylls that are the primary electron donor of PSII, and subsequent electron acceptors. It shares a non-heme iron and each subunit binds pheophytin, quinone, additional chlorophylls, carotenoids and lipids. There is also a Cl(-1) ion associated with D1 and D2, which is required for oxygen evolution. The PSII complex binds additional chlorophylls, carotenoids and specific lipids. serves as cofactor.

The protein localises to the plastid. It is found in the chloroplast thylakoid membrane. It catalyses the reaction 2 a plastoquinone + 4 hnu + 2 H2O = 2 a plastoquinol + O2. Photosystem II (PSII) is a light-driven water:plastoquinone oxidoreductase that uses light energy to abstract electrons from H(2)O, generating O(2) and a proton gradient subsequently used for ATP formation. It consists of a core antenna complex that captures photons, and an electron transfer chain that converts photonic excitation into a charge separation. The D1/D2 (PsbA/PsbD) reaction center heterodimer binds P680, the primary electron donor of PSII as well as several subsequent electron acceptors. D2 is needed for assembly of a stable PSII complex. This Liriodendron tulipifera (Tuliptree) protein is Photosystem II D2 protein.